A 200-amino-acid chain; its full sequence is Glycerol-3-phosphate acyltransferase (200 aa).

5 helical membrane-spanning segments follow: residues 2-22, 51-71, 84-104, 113-133, and 143-163; these read IHLL…AVIV, TAAI…VVAA, IVLL…FFGF, ALGI…ATWV, and SLSA…LLGW.

This sequence belongs to the PlsY family. In terms of assembly, probably interacts with PlsX.

It is found in the cell inner membrane. It carries out the reaction an acyl phosphate + sn-glycerol 3-phosphate = a 1-acyl-sn-glycero-3-phosphate + phosphate. Its pathway is lipid metabolism; phospholipid metabolism. Catalyzes the transfer of an acyl group from acyl-phosphate (acyl-PO(4)) to glycerol-3-phosphate (G3P) to form lysophosphatidic acid (LPA). This enzyme utilizes acyl-phosphate as fatty acyl donor, but not acyl-CoA or acyl-ACP. The protein is Glycerol-3-phosphate acyltransferase of Thiobacillus denitrificans (strain ATCC 25259 / T1).